The primary structure comprises 851 residues: mRNA-capping enzyme catalytic subunit (851 aa).

A triphosphatase-guanylyltransferase region spans residues 1–544 (MDKYISKTPL…EEEKLADIAA (544 aa)). Mg(2+) contacts are provided by E38, E40, E199, and E201. K266 serves as the catalytic N6-GMP-lysine intermediate. 554–555 (LN) contacts S-adenosyl-L-methionine. The 286-residue stretch at 565 to 850 (RVRGALGILS…HYMVYVFSKE (286 aa)) folds into the mRNA cap 0 methyltransferase domain. An mRNA-binding site is contributed by 574–575 (SN). S-adenosyl-L-methionine-binding positions include K578, D603, D625, and 683–685 (QFA).

The protein in the N-terminal section; belongs to the dsDNA virus mRNA guanylyltransferase family. It in the C-terminal section; belongs to the class I-like SAM-binding methyltransferase superfamily. mRNA cap 0 methyltransferase family. In terms of assembly, heterodimer of a catalytic and a regulatory subunit. Intrinsic methyltransferase activity of the catalytic subunit is weak and needs to be stimulated 30- to 50-fold by the regulatory subunit, which is itself catalytically inert. It depends on Mg(2+) as a cofactor.

It localises to the virion. The enzyme catalyses a 5'-end triphospho-ribonucleoside in mRNA + H2O = a 5'-end diphospho-ribonucleoside in mRNA + phosphate + H(+). It catalyses the reaction a 5'-end diphospho-ribonucleoside in mRNA + GTP + H(+) = a 5'-end (5'-triphosphoguanosine)-ribonucleoside in mRNA + diphosphate. The catalysed reaction is a 5'-end (5'-triphosphoguanosine)-ribonucleoside in mRNA + S-adenosyl-L-methionine = a 5'-end (N(7)-methyl 5'-triphosphoguanosine)-ribonucleoside in mRNA + S-adenosyl-L-homocysteine. In terms of biological role, catalytic subunit of the mRNA capping enzyme which catalyzes three enzymatic reactions: the 5' triphosphate end of the pre-mRNA is hydrolyzed to a diphosphate by RNA 5' triphosphatase; the diphosphate RNA end is capped with GMP by RNA guanylyltransferase and the GpppN cap is methylated by RNA (guanine-N7) methyltransferase. Heterodimeric mRNA capping enzyme catalyzes the linkage of a N7-methyl-guanosine moiety to the first transcribed nucleotide (cap 0 structure), whereas the polymerase associated VP39 is responsible for a second methylation at the 2'-O position of the ribose (cap 1 structure). The heterodimeric enzyme is also involved in early viral gene transcription termination and intermediate viral gene transcription initiation. Early gene transcription termination requires the termination factor VTF, the DNA-dependent ATPase NPH-I and the Rap94 subunit of the viral RNA polymerase, as well as the presence of a specific termination motif. Binds, together with RAP94, to the termination motif 5'-UUUUUNU-3' in the nascent early mRNA. This is mRNA-capping enzyme catalytic subunit from Fowlpox virus (strain NVSL) (FPV).